A 334-amino-acid polypeptide reads, in one-letter code: Glyoxylate reductase (334 aa).

Residues 158-161, 180-182, and 239-241 contribute to the NADP(+) site; these read FGRI, SRT, and IAR. Active-site residues include Arg-241 and Glu-270. His-288 acts as the Proton donor in catalysis. An NADP(+)-binding site is contributed by 288-290; sequence HIG.

Belongs to the D-isomer specific 2-hydroxyacid dehydrogenase family. GyaR subfamily. In terms of assembly, homodimer.

It localises to the cytoplasm. It catalyses the reaction glycolate + NAD(+) = glyoxylate + NADH + H(+). The protein is Glyoxylate reductase of Thermococcus onnurineus (strain NA1).